A 237-amino-acid polypeptide reads, in one-letter code: Lectin (237 aa).

Mn(2+)-binding residues include E8 and D10. Residues D10, Y12, N14, and D19 each coordinate Ca(2+). A carbohydrate contacts are provided by Y12 and N14. 2 residues coordinate Mn(2+): D19 and H24. 98–100 (GLY) is a binding site for a carbohydrate. Ca(2+) is bound at residue D208. A carbohydrate is bound by residues G227 and R228.

Belongs to the leguminous lectin family. Homotetramer; dimer of dimers. Post-translationally, concanavalin A-like lectins of the Diocleinae subtribe undergo proteolytic processing referred to as circular permutation. The propeptide is split into an N-terminal and a C-terminal part, the gamma and beta chain, respectively. These are then religated in beta-gamma order to form the mature alpha chain. The beta and gamma chains can often be detected in cell extracts. Residues 1-118 of the mature chain, as displayed here, probably constitute the beta chain in the propeptide, residues 119-237 the gamma chain.

In terms of biological role, D-mannose/D-glucose-binding lectin with hemagglutinating activity towards rabbit and human erythrocytes. In rats, induces dose-dependent paw edema. Has low cytotoxicity against Artemisia sp. In Macropsychanthus comosus (Sea purse), this protein is Lectin.